A 236-amino-acid chain; its full sequence is Lipoarabinomannan carrier protein LprG (236 aa).

The first 25 residues, 1 to 25 (MQTRPRFAVQSLFAILATAAALVAG), serve as a signal peptide directing secretion. Cysteine 26 carries the N-palmitoyl cysteine lipid modification. Cysteine 26 is lipidated: S-diacylglycerol cysteine.

The protein belongs to the LppX/LprAFG lipoprotein family. As to quaternary structure, interacts with itself, Ag85A (MSMEG_6398), LppI (MSMEG_3851) and LppK (MSMEG_3904) in vivo.

It localises to the cell inner membrane. The protein resides in the secreted. It is found in the cell wall. Helps membrane protein MSMEG_3069/MSMEI_2992 (P55) transport triacylglycerides (TAG) across the inner cell membrane into the periplasm and probably ultimately to the outer membrane. Binds TAG in its hydrophobic cavity and transfers it between lipid bilayers. TAG probably regulates lipid metabolism and growth regulation and plays a structural role in the outer membrane. Also binds mannosides, lipoarabinomannan and lipomannan and various glycolipids in the same cavity. Required for MSMEG_3069/MSMEI_2992 export activity. Export of ethidium bromide by MSMEG_3069/MSMEI_2992 can be complemented by the equivalent operon from M.tuberculosis (lprG-Rv1410c). Involved in mycolylation. The protein is Lipoarabinomannan carrier protein LprG of Mycolicibacterium smegmatis (strain ATCC 700084 / mc(2)155) (Mycobacterium smegmatis).